The chain runs to 593 residues: Phosphoinositide phosphatase SAC6 (593 aa).

Positions 128 to 456 constitute an SAC domain; sequence LSVAERTTGL…GDDISIQYSG (329 aa). A Phosphatase catalytic core motif is present at residues 391-402; it reads RTNCIDCLDRTN. The next 2 helical transmembrane spans lie at 526–546 and 555–575; these read AVAN…FATM and YKHL…AALV.

In terms of tissue distribution, predominantly expressed in flowers.

Its subcellular location is the endoplasmic reticulum membrane. Phosphoinositide phosphatase that hydrolyzes PtdIns(3)P and PtdIns(4)P. Involved in priming for different defense responses. The polypeptide is Phosphoinositide phosphatase SAC6 (SAC6) (Arabidopsis thaliana (Mouse-ear cress)).